The sequence spans 321 residues: Phosphatidate cytidylyltransferase, mitochondrial (321 aa).

This sequence belongs to the TAM41 family. Mg(2+) is required as a cofactor. The cofactor is Co(2+). It depends on Cu(2+) as a cofactor.

The protein localises to the mitochondrion inner membrane. It carries out the reaction a 1,2-diacyl-sn-glycero-3-phosphate + CTP + H(+) = a CDP-1,2-diacyl-sn-glycerol + diphosphate. Its pathway is phospholipid metabolism; CDP-diacylglycerol biosynthesis; CDP-diacylglycerol from sn-glycerol 3-phosphate: step 3/3. Functionally, catalyzes the formation of CDP-diacylglycerol (CDP-DAG) from phosphatidic acid (PA) in the mitochondrial inner membrane. Required for the biosynthesis of the dimeric phospholipid cardiolipin, which stabilizes supercomplexes of the mitochondrial respiratory chain in the mitochondrial inner membrane. This is Phosphatidate cytidylyltransferase, mitochondrial from Caenorhabditis briggsae.